Here is a 2073-residue protein sequence, read N- to C-terminus: Dedicator of cytokinesis protein 11 (2073 aa).

The residue at position 12 (Ser12) is a Phosphoserine. Thr16 bears the Phosphothreonine mark. Ser23 and Ser161 each carry phosphoserine. In terms of domain architecture, PH spans 165–272; that stretch reads GVIKQGWLHK…WLITLKKIIQ (108 aa). The residue at position 248 (Tyr248) is a Phosphotyrosine. A phosphoserine mark is found at Ser306, Ser440, and Ser445. One can recognise a C2 DOCK-type domain in the interval 640–818; the sequence is KNHLYVYPLQ…PLLKIKSHLE (179 aa). Residues 1226–1267 are disordered; the sequence is FQNGHGIKREDSRGSLIPEGATGFPDQGNTGENTRQSSTRSS. A phosphoserine mark is found at Ser1237 and Ser1240. Residues 1609–2036 enclose the DOCKER domain; it reads KSYASTPELR…LSDIIHEQIL (428 aa).

Belongs to the DOCK family. As to quaternary structure, interacts with CDC42.

In terms of biological role, guanine nucleotide-exchange factor (GEF) that activates CDC42 by exchanging bound GDP for free GTP. Required for marginal zone (MZ) B-cell development, is associated with early bone marrow B-cell development, MZ B-cell formation, MZ B-cell number and marginal metallophilic macrophages morphology. Facilitates filopodia formation through the activation of CDC42. In Homo sapiens (Human), this protein is Dedicator of cytokinesis protein 11.